A 384-amino-acid polypeptide reads, in one-letter code: S-adenosylmethionine synthase (384 aa).

H15 provides a ligand contact to ATP. D17 provides a ligand contact to Mg(2+). A K(+)-binding site is contributed by E43. Residues E56 and Q99 each coordinate L-methionine. Positions 99–109 are flexible loop; that stretch reads QSADINQGVDR. ATP is bound by residues 164–166, 230–231, D239, 245–246, A262, and K266; these read DAK, RF, and RK. Position 239 (D239) interacts with L-methionine. K270 lines the L-methionine pocket.

Belongs to the AdoMet synthase family. As to quaternary structure, homotetramer; dimer of dimers. Mg(2+) is required as a cofactor. Requires K(+) as cofactor.

It localises to the cytoplasm. It carries out the reaction L-methionine + ATP + H2O = S-adenosyl-L-methionine + phosphate + diphosphate. Its pathway is amino-acid biosynthesis; S-adenosyl-L-methionine biosynthesis; S-adenosyl-L-methionine from L-methionine: step 1/1. Its function is as follows. Catalyzes the formation of S-adenosylmethionine (AdoMet) from methionine and ATP. The overall synthetic reaction is composed of two sequential steps, AdoMet formation and the subsequent tripolyphosphate hydrolysis which occurs prior to release of AdoMet from the enzyme. This Haemophilus influenzae (strain 86-028NP) protein is S-adenosylmethionine synthase.